Reading from the N-terminus, the 389-residue chain is Exodeoxyribonuclease 7 large subunit (389 aa).

It belongs to the XseA family. As to quaternary structure, heterooligomer composed of large and small subunits.

The protein localises to the cytoplasm. The enzyme catalyses Exonucleolytic cleavage in either 5'- to 3'- or 3'- to 5'-direction to yield nucleoside 5'-phosphates.. Bidirectionally degrades single-stranded DNA into large acid-insoluble oligonucleotides, which are then degraded further into small acid-soluble oligonucleotides. In Pseudothermotoga lettingae (strain ATCC BAA-301 / DSM 14385 / NBRC 107922 / TMO) (Thermotoga lettingae), this protein is Exodeoxyribonuclease 7 large subunit.